The primary structure comprises 217 residues: Translation initiation factor IF-3 (217 aa).

The disordered stretch occupies residues 185-217 (YNLPETETTRIREENREKQKEKENTSKEGNKDA). The segment covering 191–217 (ETTRIREENREKQKEKENTSKEGNKDA) has biased composition (basic and acidic residues).

This sequence belongs to the IF-3 family. As to quaternary structure, monomer.

It localises to the cytoplasm. Functionally, IF-3 binds to the 30S ribosomal subunit and shifts the equilibrium between 70S ribosomes and their 50S and 30S subunits in favor of the free subunits, thus enhancing the availability of 30S subunits on which protein synthesis initiation begins. In Methylacidiphilum infernorum (isolate V4) (Methylokorus infernorum (strain V4)), this protein is Translation initiation factor IF-3.